Here is a 426-residue protein sequence, read N- to C-terminus: Histidine--tRNA ligase (426 aa).

This sequence belongs to the class-II aminoacyl-tRNA synthetase family. Homodimer.

It is found in the cytoplasm. The enzyme catalyses tRNA(His) + L-histidine + ATP = L-histidyl-tRNA(His) + AMP + diphosphate + H(+). The sequence is that of Histidine--tRNA ligase from Microcystis aeruginosa (strain NIES-843 / IAM M-2473).